The chain runs to 263 residues: Phosphoinositide-3-kinase-interacting protein 1 (263 aa).

Residues 1-21 (MLLAWVQAFLVSNMLLAEAYG) form the signal peptide. At 22–168 (SGGCFWDNGH…NSKEKKDLGT (147 aa)) the chain is on the extracellular side. The Kringle domain maps to 24–101 (GCFWDNGHLY…EKRPCEDLRC (78 aa)). Disulfide bonds link cysteine 25–cysteine 101, cysteine 46–cysteine 82, and cysteine 70–cysteine 96. Serine 39 carries an O-linked (GalNAc...) serine glycan. Asparagine 66 carries N-linked (GlcNAc...) (complex) asparagine glycosylation. Residues 169–189 (LGYVLGITMMVIIIAIGAGII) traverse the membrane as a helical segment. The Cytoplasmic segment spans residues 190–263 (LGYSYKRGKD…LMGQAGTPGA (74 aa)). Polar residues predominate over residues 242-251 (QTPVDPQEGT). The tract at residues 242-263 (QTPVDPQEGTTPLMGQAGTPGA) is disordered.

Post-translationally, N- and O-glycosylated. O-glycosylated with core 1 or possibly core 8 glycans. N-glycan heterogeneity at Asn-66: dHex1Hex5HexNAc4 (major) and dHex1Hex6HexNAc5 (minor).

Its subcellular location is the cell membrane. Its function is as follows. Negative regulator of hepatic phosphatidylinositol 3-kinase (PI3K) activity. This is Phosphoinositide-3-kinase-interacting protein 1 (PIK3IP1) from Homo sapiens (Human).